The sequence spans 795 residues: uncharacterized protein (795 aa).

The stretch at 228-280 (NIICFKNKCKNNEKEKKEEEEDHDHDHDDKKKEKEDKEKEEEEEEEDSNDDFE) forms a coiled coil. Disordered regions lie at residues 242 to 278 (EKKE…SNDD), 326 to 430 (TTTT…TPNR), 455 to 484 (INQQ…KSEP), and 673 to 743 (NNNN…NENE). A compositionally biased stretch (basic and acidic residues) spans 251–264 (DHDHDDKKKEKEDK). The span at 265–278 (EKEEEEEEEDSNDD) shows a compositional bias: acidic residues. Residues 326-345 (TTTTTVNGSKNSSNTTTPIT) are compositionally biased toward low complexity. Positions 362 to 373 (DDDDDDDLTDED) are enriched in acidic residues. The segment covering 377–398 (HNEIYSTSPKVSHSTFCQSSPT) has biased composition (polar residues). 3 stretches are compositionally biased toward low complexity: residues 399–414 (LLDL…QQQQ), 455–480 (INQQ…SSNI), and 673–729 (NNNN…NQNE). The span at 732-743 (NENKNENENENE) shows a compositional bias: basic and acidic residues.

This is an uncharacterized protein from Dictyostelium discoideum (Social amoeba).